The chain runs to 562 residues: uncharacterized protein (562 aa).

This is an uncharacterized protein from Escherichia coli (strain K12).